A 375-amino-acid polypeptide reads, in one-letter code: Chaperone protein DnaJ (375 aa).

A J domain is found at 4–68 (DYYEVLGVGK…QKRAQYDRFG (65 aa)). The segment at 129-211 (GKETDVEIPK…CRGSGRVKVR (83 aa)) adopts a CR-type zinc-finger fold. Zn(2+) is bound by residues cysteine 142, cysteine 145, cysteine 159, cysteine 162, cysteine 185, cysteine 188, cysteine 199, and cysteine 202. 4 CXXCXGXG motif repeats span residues 142 to 149 (CDTCHGSG), 159 to 166 (CKTCSGTG), 185 to 192 (CTTCEGKG), and 199 to 206 (CSSCRGSG). Positions 349–375 (LSGEKPGQHGGEDEGFFEKMKRAFRGE) are disordered.

This sequence belongs to the DnaJ family. As to quaternary structure, homodimer. The cofactor is Zn(2+).

It localises to the cytoplasm. Participates actively in the response to hyperosmotic and heat shock by preventing the aggregation of stress-denatured proteins and by disaggregating proteins, also in an autonomous, DnaK-independent fashion. Unfolded proteins bind initially to DnaJ; upon interaction with the DnaJ-bound protein, DnaK hydrolyzes its bound ATP, resulting in the formation of a stable complex. GrpE releases ADP from DnaK; ATP binding to DnaK triggers the release of the substrate protein, thus completing the reaction cycle. Several rounds of ATP-dependent interactions between DnaJ, DnaK and GrpE are required for fully efficient folding. Also involved, together with DnaK and GrpE, in the DNA replication of plasmids through activation of initiation proteins. In Brevibacillus choshinensis, this protein is Chaperone protein DnaJ.